The sequence spans 92 residues: Acylphosphatase (92 aa).

The region spanning 5–92 (RWHLLVSGKV…QEFTDFRTTH (88 aa)) is the Acylphosphatase-like domain. Residues R20 and N38 contribute to the active site.

It belongs to the acylphosphatase family.

It carries out the reaction an acyl phosphate + H2O = a carboxylate + phosphate + H(+). This chain is Acylphosphatase (acyP), found in Marinobacter nauticus (strain ATCC 700491 / DSM 11845 / VT8) (Marinobacter aquaeolei).